The sequence spans 382 residues: Gap junction alpha-1 protein (382 aa).

The Cytoplasmic portion of the chain corresponds to 2–23 (GDWSALGKLLDKVQAYSTAGGK). Ser-5 carries the phosphoserine modification. Residues 24–44 (VWLSVLFIFRILLLGTAVESA) traverse the membrane as a helical segment. At 45–76 (WGDEQSAFRCNTQQPGCENVCYDKSFPISHVR) the chain is on the extracellular side. 2 disulfides stabilise this stretch: Cys-54–Cys-192 and Cys-187–Cys-198. A helical membrane pass occupies residues 77-97 (FWVLQIIFVSVPTLLYLAHVF). The Cytoplasmic portion of the chain corresponds to 98–155 (YVMRKEEKLNKKEEELKVAQTDGVNVDMHLKQIEIKKFKYGIEEHGKVKMRGGLLRTY). Lys-144 is covalently cross-linked (Glycyl lysine isopeptide (Lys-Gly) (interchain with G-Cter in SUMO)). The helical transmembrane segment at 156-176 (IISILFKSIFEVAFLLIQWYI) threads the bilayer. At 177 to 207 (YGFSLSAVYTCKRDPCPHQVDCFLSRPTEKT) the chain is on the extracellular side. Residues 208–228 (IFIIFMLVVSLVSLALNIIEL) traverse the membrane as a helical segment. Residues 229–382 (FYVFFKGVKD…SRPRPDDLEI (154 aa)) are Cytoplasmic-facing. Residue Lys-237 forms a Glycyl lysine isopeptide (Lys-Gly) (interchain with G-Cter in SUMO) linkage. The interaction with NOV stretch occupies residues 244-382 (SDPYHATSGA…SRPRPDDLEI (139 aa)). Tyr-247 bears the Phosphotyrosine mark. A phosphoserine mark is found at Ser-255 and Ser-262. The segment at 264–382 (KYAYFNGCSS…SRPRPDDLEI (119 aa)) is interaction with UBQLN4. Cys-271 bears the S-nitrosocysteine mark. Thr-275 is subject to Phosphothreonine. Phosphoserine occurs at positions 306 and 314. Residues 317–332 (QNRMGQAGSTISNSHA) show a composition bias toward polar residues. Residues 317–382 (QNRMGQAGST…SRPRPDDLEI (66 aa)) are disordered. At Ser-325 the chain carries Phosphoserine; by CK1. Thr-326 is subject to Phosphothreonine. Ser-328 and Ser-330 each carry phosphoserine; by CK1. Residues Ser-344 and Ser-365 each carry the phosphoserine modification. Low complexity predominate over residues 362 to 374 (RPSSRASSRASSR). Ser-368 is subject to Phosphoserine; by PKC/PRKCG and PKC/PRKCD. Phosphoserine is present on residues Ser-369 and Ser-373.

This sequence belongs to the connexin family. Alpha-type (group II) subfamily. A connexon is composed of a hexamer of connexins. Interacts (via C-terminus) with TJP1. Interacts (via C-terminus) with SRC (via SH3 domain). Interacts (not ubiquitinated) with UBQLN4 (via UBA domain). Interacts with SGSM3 and CNST. Interacts with RIC1/CIP150. Interacts with CSNK1D. Interacts with NOV. Interacts with TMEM65. Interacts with ANK3/ANKG and PKP2. Post-translationally, phosphorylated at Ser-368 by PRKCG; phosphorylation induces disassembly of gap junction plaques and inhibition of gap junction activity. Phosphorylation at Ser-325, Ser-328 and Ser-330 by CK1 modulates gap junction assembly. Phosphorylation at Ser-368 by PRKCD triggers its internalization into small vesicles leading to proteasome-mediated degradation. In terms of processing, sumoylated with SUMO1, SUMO2 and SUMO3, which may regulate the level of functional Cx43 gap junctions at the plasma membrane. May be desumoylated by SENP1 or SENP2. S-nitrosylation at Cys-271 is enriched at the muscle endothelial gap junction in arteries, it augments channel permeability and may regulate of smooth muscle cell to endothelial cell communication. Post-translationally, acetylated in the developing cortex; leading to delocalization from the cell membrane. In terms of tissue distribution, expressed at intercalated disks in the heart (at protein level). Expressed in the fetal cochlea.

The protein localises to the cell membrane. The protein resides in the cell junction. Its subcellular location is the gap junction. It localises to the endoplasmic reticulum. Gap junction protein that acts as a regulator of bladder capacity. A gap junction consists of a cluster of closely packed pairs of transmembrane channels, the connexons, through which materials of low MW diffuse from one cell to a neighboring cell. May play a critical role in the physiology of hearing by participating in the recycling of potassium to the cochlear endolymph. Negative regulator of bladder functional capacity: acts by enhancing intercellular electrical and chemical transmission, thus sensitizing bladder muscles to cholinergic neural stimuli and causing them to contract. May play a role in cell growth inhibition through the regulation of NOV expression and localization. Plays an essential role in gap junction communication in the ventricles. This Homo sapiens (Human) protein is Gap junction alpha-1 protein (GJA1).